The sequence spans 505 residues: Probable inorganic carbon transporter subunit DabB (505 aa).

13 consecutive transmembrane segments (helical) span residues 9–29, 37–57, 68–88, 105–123, 162–182, 204–224, 231–251, 259–279, 303–323, 355–375, 382–402, 410–430, and 446–466; these read SLLT…LLFL, FVRI…LILA, WHLD…GFII, YFTL…WLSG, LFLL…HATG, TGIQ…WPFQ, IVAP…AGGI, LFHG…SVLI, GFML…HLIL, LWVM…WLTA, LISA…LVAF, IAGL…HHLF, and MSAV…GTWV.

The protein belongs to the inorganic carbon transporter (TC 9.A.2) DabB family. As to quaternary structure, forms a complex with DabA.

Its subcellular location is the cell membrane. In terms of biological role, part of an energy-coupled inorganic carbon pump. This Bacillus subtilis (strain 168) protein is Probable inorganic carbon transporter subunit DabB.